Here is a 523-residue protein sequence, read N- to C-terminus: Maturase K (523 aa).

This sequence belongs to the intron maturase 2 family. MatK subfamily.

It localises to the plastid. It is found in the chloroplast. In terms of biological role, usually encoded in the trnK tRNA gene intron. Probably assists in splicing its own and other chloroplast group II introns. The protein is Maturase K of Asphodeline lutea (King's spear).